Reading from the N-terminus, the 102-residue chain is MYAIIATGGKQYTVSEGDTIRVEKLAVNAGDTVTFDQVLFVNNGEAKVGEPTVAGATVTASVVGEGRDKKVIVYKYKRKTGYHKKNGHRQAYTEVKIEKINA.

It belongs to the bacterial ribosomal protein bL21 family. Part of the 50S ribosomal subunit. Contacts protein L20.

Functionally, this protein binds to 23S rRNA in the presence of protein L20. The chain is Large ribosomal subunit protein bL21 from Lachnospira eligens (strain ATCC 27750 / DSM 3376 / VPI C15-48 / C15-B4) (Eubacterium eligens).